The following is a 634-amino-acid chain: DNA-directed RNA polymerase subunit gamma (634 aa).

Zn(2+)-binding residues include Cys-74, Cys-76, Cys-89, and Cys-92. Residues Asp-471, Asp-473, and Asp-475 each contribute to the Mg(2+) site.

The protein belongs to the RNA polymerase beta' chain family. RpoC1 subfamily. In cyanobacteria the RNAP catalytic core is composed of 2 alpha, 1 beta, 1 beta', 1 gamma and 1 omega subunit. When a sigma factor is associated with the core the holoenzyme is formed, which can initiate transcription. It depends on Mg(2+) as a cofactor. Zn(2+) serves as cofactor.

It catalyses the reaction RNA(n) + a ribonucleoside 5'-triphosphate = RNA(n+1) + diphosphate. DNA-dependent RNA polymerase catalyzes the transcription of DNA into RNA using the four ribonucleoside triphosphates as substrates. The chain is DNA-directed RNA polymerase subunit gamma from Prochlorococcus marinus (strain SARG / CCMP1375 / SS120).